A 409-amino-acid chain; its full sequence is Dual-specificity RNA methyltransferase RlmN (409 aa).

The Proton acceptor role is filled by Glu-126. The Radical SAM core domain occupies Glu-132–Arg-373. Cysteines 139 and 384 form a disulfide. Residues Cys-146, Cys-150, and Cys-153 each contribute to the [4Fe-4S] cluster site. S-adenosyl-L-methionine is bound by residues Gly-210–Glu-211, Ser-242, Ser-264–His-266, and Asn-341. The active-site S-methylcysteine intermediate is the Cys-384.

This sequence belongs to the radical SAM superfamily. RlmN family. [4Fe-4S] cluster serves as cofactor.

The protein resides in the cytoplasm. The enzyme catalyses adenosine(2503) in 23S rRNA + 2 reduced [2Fe-2S]-[ferredoxin] + 2 S-adenosyl-L-methionine = 2-methyladenosine(2503) in 23S rRNA + 5'-deoxyadenosine + L-methionine + 2 oxidized [2Fe-2S]-[ferredoxin] + S-adenosyl-L-homocysteine. The catalysed reaction is adenosine(37) in tRNA + 2 reduced [2Fe-2S]-[ferredoxin] + 2 S-adenosyl-L-methionine = 2-methyladenosine(37) in tRNA + 5'-deoxyadenosine + L-methionine + 2 oxidized [2Fe-2S]-[ferredoxin] + S-adenosyl-L-homocysteine. Functionally, specifically methylates position 2 of adenine 2503 in 23S rRNA and position 2 of adenine 37 in tRNAs. m2A2503 modification seems to play a crucial role in the proofreading step occurring at the peptidyl transferase center and thus would serve to optimize ribosomal fidelity. In Bartonella quintana (strain Toulouse) (Rochalimaea quintana), this protein is Dual-specificity RNA methyltransferase RlmN.